Consider the following 985-residue polypeptide: Ephrin type-B receptor 1-A (985 aa).

The first 19 residues, 1–19 (MELNVLLLLLCLSGGQVGA), serve as a signal peptide directing secretion. Residues 20–542 (VEETLMDTRT…YKSELREQLP (523 aa)) are Extracellular-facing. The region spanning 21–203 (EETLMDTRTA…FFKEMPSVVQ (183 aa)) is the Eph LBD domain. 2 Fibronectin type-III domains span residues 324-434 (VPSG…TNQA) and 435-532 (APSS…TAED). N-linked (GlcNAc...) asparagine glycans are attached at residues Asn336, Asn428, and Asn482. A helical membrane pass occupies residues 543–563 (LTGSAAAGVVFIVSLVAISIV). The Cytoplasmic segment spans residues 564 to 985 (CSRKRTYSKE…QITQSPTSIA (422 aa)). In terms of domain architecture, Protein kinase spans 620–883 (VKIEEVIGAG…EIVNTLRPMI (264 aa)). ATP contacts are provided by residues 626-634 (IGAGEFGEV) and Lys652. Asp745 functions as the Proton acceptor in the catalytic mechanism. Residues 912 to 976 (SAFTSVDDWL…LNSIQSMRVQ (65 aa)) enclose the SAM domain. Positions 983-985 (SIA) match the PDZ-binding motif.

Belongs to the protein kinase superfamily. Tyr protein kinase family. Ephrin receptor subfamily. In terms of assembly, heterotetramer upon binding of the ligand. The heterotetramer is composed of an ephrin dimer and a receptor dimer. Oligomerization is probably required to induce biological responses. In terms of processing, phosphorylated. Autophosphorylation is stimulated by ligands.

It localises to the cell membrane. It is found in the early endosome membrane. The protein localises to the cell projection. Its subcellular location is the dendrite. The catalysed reaction is L-tyrosyl-[protein] + ATP = O-phospho-L-tyrosyl-[protein] + ADP + H(+). In terms of biological role, receptor tyrosine kinase which binds promiscuously transmembrane ephrin-B family ligands residing on adjacent cells, leading to contact-dependent bidirectional signaling into neighboring cells. The signaling pathway downstream of the receptor is referred to as forward signaling while the signaling pathway downstream of the ephrin ligand is referred to as reverse signaling. May play a role in axon guidance during nervous system development. May also play an important redundant role with other ephrin-B receptors in development and maturation of dendritic spines and synapse formation. More generally, may play a role in targeted cell migration and adhesion. Upon activation by ephrin-B ligands activates the MAPK/ERK and the JNK signaling cascades to regulate cell migration and adhesion respectively. The protein is Ephrin type-B receptor 1-A (ephb1-a) of Xenopus laevis (African clawed frog).